Here is a 95-residue protein sequence, read N- to C-terminus: uncharacterized protein (95 aa).

This is an uncharacterized protein from Autographa californica nuclear polyhedrosis virus (AcMNPV).